The chain runs to 349 residues: Probable transporter vicT (349 aa).

The region spanning 25–153 (IAAALLHALA…TALAGVVLVL (129 aa)) is the EamA domain. Transmembrane regions (helical) follow at residues 49 to 69 (PFTV…AYLW), 89 to 109 (AAGG…LSLS), 111 to 131 (ATVL…YWEG), 133 to 153 (TFAF…VLVL), 179 to 199 (LKGV…FSAM), 215 to 235 (FGVS…EVVW), 244 to 264 (LLAI…AGLG), 269 to 289 (RVTI…WAIW), and 294 to 314 (NVLT…PYLF).

Belongs to the TPT transporter family. SLC35D subfamily.

Its subcellular location is the membrane. In terms of biological role, probable transporter; part of the gene cluster that mediates the biosynthesis of the secondary metabolite victorin, the molecular basis for Victoria blight of oats. This chain is Probable transporter vicT, found in Bipolaris victoriae (strain FI3) (Victoria blight of oats agent).